The following is a 413-amino-acid chain: 1-deoxy-D-xylulose 5-phosphate reductoisomerase (413 aa).

NADPH is bound by residues Thr28, Gly29, Ser30, Ile31, Gly54, Arg55, Asn56, and Asn142. Residue Lys143 coordinates 1-deoxy-D-xylulose 5-phosphate. Glu144 lines the NADPH pocket. A Mn(2+)-binding site is contributed by Asp168. 1-deoxy-D-xylulose 5-phosphate-binding residues include Ser169, Glu170, Ser194, and His217. Residue Glu170 coordinates Mn(2+). Position 223 (Gly223) interacts with NADPH. Residues Ser230, Asn235, Lys236, and Glu239 each contribute to the 1-deoxy-D-xylulose 5-phosphate site. Glu239 is a binding site for Mn(2+).

It belongs to the DXR family. The cofactor is Mg(2+). Requires Mn(2+) as cofactor.

It carries out the reaction 2-C-methyl-D-erythritol 4-phosphate + NADP(+) = 1-deoxy-D-xylulose 5-phosphate + NADPH + H(+). The protein operates within isoprenoid biosynthesis; isopentenyl diphosphate biosynthesis via DXP pathway; isopentenyl diphosphate from 1-deoxy-D-xylulose 5-phosphate: step 1/6. In terms of biological role, catalyzes the NADPH-dependent rearrangement and reduction of 1-deoxy-D-xylulose-5-phosphate (DXP) to 2-C-methyl-D-erythritol 4-phosphate (MEP). This Thermosynechococcus vestitus (strain NIES-2133 / IAM M-273 / BP-1) protein is 1-deoxy-D-xylulose 5-phosphate reductoisomerase.